The sequence spans 231 residues: Cytochrome c oxidase assembly factor 7 (231 aa).

At Ala2 the chain carries N-acetylalanine. Sel1-like repeat units follow at residues 34-66, 68-104, 108-146, 147-183, and 184-219; these read PDGC…EENQ, SDSC…EKPG, IAAC…DGGY, TSSC…DLGH, and IWAC…QLHK.

This sequence belongs to the hcp beta-lactamase family. As to quaternary structure, interacts with CHCHD4/MIA40 through transient intermolecular disulfide bonds.

Its subcellular location is the mitochondrion intermembrane space. Required for assembly of mitochondrial respiratory chain complex I and complex IV. The sequence is that of Cytochrome c oxidase assembly factor 7 (COA7) from Homo sapiens (Human).